We begin with the raw amino-acid sequence, 84 residues long: Large ribosomal subunit protein bL27 (84 aa).

The segment at M1–G22 is disordered.

Belongs to the bacterial ribosomal protein bL27 family.

This chain is Large ribosomal subunit protein bL27, found in Shewanella oneidensis (strain ATCC 700550 / JCM 31522 / CIP 106686 / LMG 19005 / NCIMB 14063 / MR-1).